The primary structure comprises 209 residues: Uracil phosphoribosyltransferase (209 aa).

5-phospho-alpha-D-ribose 1-diphosphate contacts are provided by residues arginine 79, arginine 104, and aspartate 131 to serine 139. Residues isoleucine 194 and glycine 199 to alanine 201 contribute to the uracil site. 5-phospho-alpha-D-ribose 1-diphosphate is bound at residue aspartate 200.

It belongs to the UPRTase family. The cofactor is Mg(2+).

It catalyses the reaction UMP + diphosphate = 5-phospho-alpha-D-ribose 1-diphosphate + uracil. It participates in pyrimidine metabolism; UMP biosynthesis via salvage pathway; UMP from uracil: step 1/1. With respect to regulation, allosterically activated by GTP. Functionally, catalyzes the conversion of uracil and 5-phospho-alpha-D-ribose 1-diphosphate (PRPP) to UMP and diphosphate. The sequence is that of Uracil phosphoribosyltransferase from Acidovorax sp. (strain JS42).